The chain runs to 394 residues: Potassium channel subfamily K member 3 (394 aa).

The Cytoplasmic segment spans residues 1–8; that stretch reads MKRQNVRT. A helical membrane pass occupies residues 9–29; that stretch reads LALIVCTFTYLLVGAAVFDAL. A glycan (N-linked (GlcNAc...) asparagine) is linked at Asn53. Positions 78 to 101 form an intramembrane region, pore-forming; sequence WRFAGSFYFAITVITTIGYGHAAP. Residues Thr93, Ile94, Gly95, and Tyr96 each contribute to the K(+) site. The interval 93 to 98 is selectivity filter 1; sequence TIGYGH. A helical membrane pass occupies residues 108–128; the sequence is VFCMFYALLGIPLTLVMFQSL. The Cytoplasmic segment spans residues 129–158; sequence GERINTLVRYLLHRAKKGLGMRRADVSMAN. A helical transmembrane segment spans residues 159-179; sequence MVLIGFFSCISTLCIGAAAFS. The segment at residues 184–207 is an intramembrane region (pore-forming); the sequence is WTFFQAYYYCFITLTTIGFGDYVA. 4 residues coordinate K(+): Thr199, Ile200, Gly201, and Phe202. The interval 199–204 is selectivity filter 2; sequence TIGFGD. The chain crosses the membrane as a helical span at residues 223–243; that stretch reads FSFVYILTGLTVIGAFLNLVV. The tract at residues 243–248 is X-gate; the sequence is VLRFMT. At 244–394 the chain is on the cytoplasmic side; the sequence is LRFMTMNAED…RGLMKRRSSV (151 aa). Disordered stretches follow at residues 266–286 and 338–357; these read RNGQ…DTAS and TCVE…SDTP. Over residues 269–278 the composition is skewed to gly residues; it reads QAGGGGGGGS.

The protein belongs to the two pore domain potassium channel (TC 1.A.1.8) family. Homodimer. Heterodimer with KCNK1. Heterodimer with KCNK9. In terms of tissue distribution, widespread expression in adult. Strongest expression in pancreas and placenta. Lower expression in brain, lung, prostate, heart, kidney, uterus, small intestine and colon.

Its subcellular location is the cell membrane. It carries out the reaction K(+)(in) = K(+)(out). The enzyme catalyses Na(+)(in) = Na(+)(out). With respect to regulation, inhibited by external acidification, diacylglycerol and anandamide. Activated by halothane and isoflurane. Its function is as follows. K(+) channel that conducts voltage-dependent outward rectifying currents upon membrane depolarization. Voltage sensing is coupled to K(+) electrochemical gradient in an 'ion flux gating' mode where outward but not inward ion flow opens the gate. Changes ion selectivity and becomes permeable to Na(+) ions in response to extracellular acidification. Protonation of the pH sensor His-98 stabilizes C-type inactivation conformation likely converting the channel from outward K(+)-conducting, to inward Na(+)-conducting to nonconductive state. Homo- and heterodimerizes to form functional channels with distinct regulatory and gating properties. Allows K(+) currents with fast-gating kinetics important for the repolarization and hyperpolarization phases of action potentials. In cerebellar granule cells, heteromeric KCNK3:KCNK9 channel may hyperpolarize the resting membrane potential to limit intrinsic neuronal excitability, but once the action potential threshold is reached, it may support high-frequency action potential firing and increased neuronal excitability. Dispensable for central chemosensory respiration i.e. breathing controlled by brainstem CO2/pH, it rather conducts pH-sensitive currents and controls the firing rate of serotonergic raphe neurons involved in potentiation of the respiratory chemoreflex. Additionally, imparts chemosensitivity to type 1 cells in carotid bodies which respond to a decrease in arterial oxygen pressure or an increase in carbon dioxide pressure or pH to initiate adaptive changes in pulmonary ventilation. In adrenal gland, contributes to the maintenance of a hyperpolarized resting membrane potential of aldosterone-producing cells at zona glomerulosa and limits aldosterone release as part of a regulatory mechanism that controls arterial blood pressure and electrolyte homeostasis. In brown adipocytes, mediates K(+) efflux that counteracts norepinephrine-induced membrane depolarization, limits Ca(2+) efflux and downstream cAMP and PKA signaling, ultimately attenuating lipid oxidation and adaptive thermogenesis. The sequence is that of Potassium channel subfamily K member 3 from Homo sapiens (Human).